Consider the following 407-residue polypeptide: Multifunctional CCA protein (407 aa).

Residues G8 and R11 each contribute to the ATP site. Residues G8 and R11 each contribute to the CTP site. Mg(2+)-binding residues include D21 and D23. 3 residues coordinate ATP: R91, R137, and R140. Residues R91, R137, and R140 each coordinate CTP. One can recognise an HD domain in the interval 228–329 (TGIHTLMVAQ…IKIFDKMDVW (102 aa)).

It belongs to the tRNA nucleotidyltransferase/poly(A) polymerase family. Bacterial CCA-adding enzyme type 1 subfamily. As to quaternary structure, monomer. Can also form homodimers and oligomers. It depends on Mg(2+) as a cofactor. Requires Ni(2+) as cofactor.

It carries out the reaction a tRNA precursor + 2 CTP + ATP = a tRNA with a 3' CCA end + 3 diphosphate. It catalyses the reaction a tRNA with a 3' CCA end + 2 CTP + ATP = a tRNA with a 3' CCACCA end + 3 diphosphate. Functionally, catalyzes the addition and repair of the essential 3'-terminal CCA sequence in tRNAs without using a nucleic acid template. Adds these three nucleotides in the order of C, C, and A to the tRNA nucleotide-73, using CTP and ATP as substrates and producing inorganic pyrophosphate. tRNA 3'-terminal CCA addition is required both for tRNA processing and repair. Also involved in tRNA surveillance by mediating tandem CCA addition to generate a CCACCA at the 3' terminus of unstable tRNAs. While stable tRNAs receive only 3'-terminal CCA, unstable tRNAs are marked with CCACCA and rapidly degraded. The protein is Multifunctional CCA protein of Aliivibrio fischeri (strain ATCC 700601 / ES114) (Vibrio fischeri).